The primary structure comprises 580 residues: Isochorismate synthase, chloroplastic (580 aa).

The transit peptide at 1–91 (MASITGHCVA…LAMERLSSAV (91 aa)) directs the protein to the chloroplast.

It belongs to the isochorismate synthase family. Requires Mg(2+) as cofactor.

The protein localises to the plastid. Its subcellular location is the chloroplast. The catalysed reaction is chorismate = isochorismate. Its activity is regulated as follows. Not inhibited by Tyr, Phe or Trp. Involved in the synthesis of o-succinylbenzoic acid, 2,3-dihydroxybenzoic acid and salicylic acid (SA). The protein is Isochorismate synthase, chloroplastic of Catharanthus roseus (Madagascar periwinkle).